We begin with the raw amino-acid sequence, 138 residues long: Large ribosomal subunit protein bL19 (138 aa).

The protein belongs to the bacterial ribosomal protein bL19 family.

In terms of biological role, this protein is located at the 30S-50S ribosomal subunit interface and may play a role in the structure and function of the aminoacyl-tRNA binding site. This Leptospira interrogans serogroup Icterohaemorrhagiae serovar Lai (strain 56601) protein is Large ribosomal subunit protein bL19.